We begin with the raw amino-acid sequence, 486 residues long: Achaete-scute complex protein T8 (486 aa).

Disordered stretches follow at residues 1–26 (MAAL…GIKT) and 75–158 (AAST…LPLP). Residues 75–86 (AASTTNTTPISS) show a composition bias toward polar residues. In terms of domain architecture, bHLH spans 159-223 (QAVARRNARE…RMAVEYIRSL (65 aa)).

As to quaternary structure, efficient DNA binding requires dimerization with another bHLH protein. L(1)SC, SC and AC strongly label the presumptive stomatogastric nervous system, while ASE is more prominent in the presumptive procephalic lobe.

Functionally, involved in the determination of the neuronal precursors of optic lobes in the central nervous system. The polypeptide is Achaete-scute complex protein T8 (ase) (Drosophila melanogaster (Fruit fly)).